A 212-amino-acid polypeptide reads, in one-letter code: External core antigen (212 aa).

An N-terminal signal peptide occupies residues 1 to 19 (MQLFPLCLIISCSCPTVQA). An HBEAG region spans residues 25–27 (GWL). The interval 165–212 (NAPILSTLPETTVVRRRGRSPRRRTPSPRRRRSQSPRRRRSQSRESQC) is disordered. The span at 178-205 (VRRRGRSPRRRTPSPRRRRSQSPRRRRS) shows a compositional bias: basic residues. A 1; half-length repeat occupies 184-190 (SPRRRTP). The 3 X 8 AA repeats of S-P-R-R-R-R-S-Q stretch occupies residues 184–206 (SPRRRTPSPRRRRSQSPRRRRSQ). Tandem repeats lie at residues 191 to 198 (SPRRRRSQ) and 199 to 206 (SPRRRRSQ).

Belongs to the orthohepadnavirus precore antigen family. In terms of assembly, homodimerizes. Post-translationally, phosphorylated. In terms of processing, cleaved by host furin.

It is found in the secreted. It localises to the host nucleus. In terms of biological role, may regulate immune response to the intracellular capsid in acting as a T-cell tolerogen, by having an immunoregulatory effect which prevents destruction of infected cells by cytotoxic T-cells. This immune regulation may predispose to chronicity during perinatal infections and prevent severe liver injury during adult infections. This chain is External core antigen, found in Hepatitis B virus genotype C subtype ayr (isolate Human/Japan/Okamoto/-) (HBV-C).